Reading from the N-terminus, the 446-residue chain is uncharacterized protein (446 aa).

Helical transmembrane passes span 69 to 89 (FWLW…VTYL), 98 to 118 (FFLV…VWLA), 169 to 189 (HSLW…LLLV), and 247 to 267 (GLLV…AWVV).

The protein resides in the membrane. This is an uncharacterized protein from Neisseria meningitidis serogroup B (strain ATCC BAA-335 / MC58).